The sequence spans 235 residues: Germin-like protein 1-4 (235 aa).

An N-terminal signal peptide occupies residues Met1–Ala27. A disulfide bridge links Cys37 with Cys55. An N-linked (GlcNAc...) asparagine glycan is attached at Asn60. One can recognise a Cupin type-1 domain in the interval Pro69–Glu226. Mn(2+)-binding residues include His120, His122, Glu127, and His171.

This sequence belongs to the germin family. Oligomer (believed to be a pentamer but probably hexamer).

Its subcellular location is the secreted. The protein localises to the extracellular space. It localises to the apoplast. May play a role in plant defense. Probably has no oxalate oxidase activity even if the active site is conserved. This Oryza sativa subsp. japonica (Rice) protein is Germin-like protein 1-4.